A 782-amino-acid chain; its full sequence is General transcription and DNA repair factor IIH helicase/translocase subunit XPB (782 aa).

Residues M1 to K11 are compositionally biased toward basic and acidic residues. The segment at M1–T51 is disordered. Residues R6 to H18 carry the Nuclear localization signal motif. Positions D21–P30 are enriched in acidic residues. The region spanning M327–L488 is the Helicase ATP-binding domain. An ATP-binding site is contributed by L340–S347. A DEVH box motif is present at residues D441–H444. Residues R542–A702 form the Helicase C-terminal domain. S686 carries the post-translational modification Phosphoserine. S751 carries the phosphoserine; by CK2 modification.

Belongs to the helicase family. RAD25/XPB subfamily. Component of the 7-subunit TFIIH core complex composed of XPB/ERCC3, XPD/ERCC2, GTF2H1, GTF2H2, GTF2H3, GTF2H4 and GTF2H5, which is active in NER. The core complex associates with the 3-subunit CDK-activating kinase (CAK) module composed of CCNH/cyclin H, CDK7 and MNAT1 to form the 10-subunit holoenzyme (holo-TFIIH) active in transcription. Interacts with PUF60. Interacts with ATF7IP. Interacts with KAT2A; leading to KAT2A recruitment to promoters and acetylation of histones. Part of TBP-based Pol II pre-initiation complex (PIC), in which Pol II core assembles with general transcription factors and other specific initiation factors including GTF2E1, GTF2E2, GTF2F1, GTF2F2, TCEA1, ERCC2, ERCC3, GTF2H2, GTF2H3, GTF2H4, GTF2H5, GTF2A1, GTF2A2, GTF2B and TBP; this large multi-subunit PIC complex mediates DNA unwinding and targets Pol II core to the transcription start site where the first phosphodiester bond forms. In terms of processing, phosphorylation on Ser-751 by CK2 controls the 5'-excision activity of ERCC1-XPF endonuclease; phosphorylated protein inhibits the excision activity and thus NER. Dephosphorylation reactivates the 5'-excision step. Phosphorylation has no effect on transcription or the 3'-5' helicase activity.

Its subcellular location is the nucleus. It catalyses the reaction Couples ATP hydrolysis with the unwinding of duplex DNA by translocating in the 3'-5' direction.. The enzyme catalyses ATP + H2O = ADP + phosphate + H(+). With respect to regulation, phosphorylation on Ser-751 by CK2 controls the 5'-excision activity of ERCC1-XPF endonuclease; phosphorylated protein inhibits the excision activity and thus NER. ATPase activity is stimulated by TFIIH subunit p52 (GTF2H4). DNA translocase activity by this subunit in TFIIH is stimulated by XPA, ERCC5/XPG and XFP plus ERCC1. In terms of biological role, ATP-dependent 3'-5' DNA helicase/translocase; binds dsDNA rather than ssDNA, unzipping it in a translocase rather than classical helicase activity. Component of the general transcription and DNA repair factor IIH (TFIIH) core complex. When complexed to CDK-activating kinase (CAK), involved in RNA transcription by RNA polymerase II. The ATPase activity of XPB/ERCC3, but not its helicase activity, is required for DNA opening; it may wrap around the damaged DNA wedging it open, causing localized melting and twisting that allows XPD/ERCC2 helicase to anchor. The ATP-dependent helicase activity of XPB/ERCC3 may be required for promoter escape. Also involved in transcription-coupled nucleotide excision repair (NER) of damaged DNA. In NER, TFIIH acts by opening DNA around the lesion to allow the excision of the damaged oligonucleotide and its replacement by a new DNA fragment. The structure of the TFIIH transcription complex differs from the NER-TFIIH complex; large movements by XPD/ERCC2 and XPB/ERCC3 are stabilized by XPA. The chain is General transcription and DNA repair factor IIH helicase/translocase subunit XPB (ERCC3) from Bos taurus (Bovine).